A 333-amino-acid polypeptide reads, in one-letter code: 4-hydroxy-3-methylbut-2-enyl diphosphate reductase (333 aa).

Residue Cys34 participates in [4Fe-4S] cluster binding. (2E)-4-hydroxy-3-methylbut-2-enyl diphosphate contacts are provided by His63 and His96. Positions 63 and 96 each coordinate dimethylallyl diphosphate. Isopentenyl diphosphate-binding residues include His63 and His96. Cys118 is a binding site for [4Fe-4S] cluster. His146 provides a ligand contact to (2E)-4-hydroxy-3-methylbut-2-enyl diphosphate. Residue His146 coordinates dimethylallyl diphosphate. His146 provides a ligand contact to isopentenyl diphosphate. The active-site Proton donor is Glu148. Thr186 is a (2E)-4-hydroxy-3-methylbut-2-enyl diphosphate binding site. Cys216 contributes to the [4Fe-4S] cluster binding site. (2E)-4-hydroxy-3-methylbut-2-enyl diphosphate contacts are provided by Ser244, Ser245, Asn246, and Ser289. Residues Ser244, Ser245, Asn246, and Ser289 each contribute to the dimethylallyl diphosphate site. Residues Ser244, Ser245, Asn246, and Ser289 each coordinate isopentenyl diphosphate.

It belongs to the IspH family. [4Fe-4S] cluster serves as cofactor.

It carries out the reaction isopentenyl diphosphate + 2 oxidized [2Fe-2S]-[ferredoxin] + H2O = (2E)-4-hydroxy-3-methylbut-2-enyl diphosphate + 2 reduced [2Fe-2S]-[ferredoxin] + 2 H(+). It catalyses the reaction dimethylallyl diphosphate + 2 oxidized [2Fe-2S]-[ferredoxin] + H2O = (2E)-4-hydroxy-3-methylbut-2-enyl diphosphate + 2 reduced [2Fe-2S]-[ferredoxin] + 2 H(+). It functions in the pathway isoprenoid biosynthesis; dimethylallyl diphosphate biosynthesis; dimethylallyl diphosphate from (2E)-4-hydroxy-3-methylbutenyl diphosphate: step 1/1. It participates in isoprenoid biosynthesis; isopentenyl diphosphate biosynthesis via DXP pathway; isopentenyl diphosphate from 1-deoxy-D-xylulose 5-phosphate: step 6/6. In terms of biological role, catalyzes the conversion of 1-hydroxy-2-methyl-2-(E)-butenyl 4-diphosphate (HMBPP) into a mixture of isopentenyl diphosphate (IPP) and dimethylallyl diphosphate (DMAPP). Acts in the terminal step of the DOXP/MEP pathway for isoprenoid precursor biosynthesis. The polypeptide is 4-hydroxy-3-methylbut-2-enyl diphosphate reductase (Mycobacterium sp. (strain KMS)).